The chain runs to 447 residues: Oxysterols receptor LXR-alpha (447 aa).

Disordered stretches follow at residues 1 to 37 and 65 to 88; these read MSLWLGAPVPDIPPDSAVELWKPGAQDASSQAQGGSS and ALLTRAEPPSEPTEIRPQKRKKGP. A transactivation AF-1; required for ligand-independent transactivation function region spans residues 1–96; that stretch reads MSLWLGAPVP…GPAPKMLGNE (96 aa). Positions 24 to 37 are enriched in low complexity; that stretch reads GAQDASSQAQGGSS. The nuclear receptor DNA-binding region spans 95–170; it reads NELCSVCGDK…AGMREECVLS (76 aa). 2 consecutive NR C4-type zinc fingers follow at residues 98–118 and 134–158; these read CSVCGDKASGFHYNVLSCEGC and CHSGGHCPMDTYMRRKCQECRLRKC. Residues 180 to 202 form a disordered region; sequence KRQEEEQAHATSLPPRASSPPQI. Positions 205–447 are transactivation AF-2; required for ligand-dependent transactivation function; mediates interaction with CCAR2; it reads QLSPEQLGMI…LLSEIWDVHE (243 aa). Residues 209–447 form the NR LBD domain; it reads EQLGMIEKLV…LLSEIWDVHE (239 aa).

This sequence belongs to the nuclear hormone receptor family. NR1 subfamily. In terms of assembly, heterodimer of NR1H3 and RXR (retinoic acid receptor). Interacts with CCAR2 (via N-terminus) in a ligand-independent manner. Interacts with SIRT1 and this interaction is inhibited by CCAR2. Interacts with GPS2. In terms of processing, ubiquitinated by UBR5, leading to its degradation: UBR5 specifically recognizes and binds ligand-bound NR1H3 when it is not associated with coactivators (NCOAs). In presence of NCOAs, the UBR5-degron is not accessible, preventing its ubiquitination and degradation. Visceral organs specific expression. Strong expression was found in liver, kidney and intestine followed by spleen and to a lesser extent the adrenals.

The protein localises to the nucleus. The protein resides in the cytoplasm. Functionally, nuclear receptor that exhibits a ligand-dependent transcriptional activation activity. Interaction with retinoic acid receptor (RXR) shifts RXR from its role as a silent DNA-binding partner to an active ligand-binding subunit in mediating retinoid responses through target genes defined by LXRES. LXRES are DR4-type response elements characterized by direct repeats of two similar hexanuclotide half-sites spaced by four nucleotides. Plays an important role in the regulation of cholesterol homeostasis, regulating cholesterol uptake through MYLIP-dependent ubiquitination of LDLR, VLDLR and LRP8. Interplays functionally with RORA for the regulation of genes involved in liver metabolism. Induces LPCAT3-dependent phospholipid remodeling in endoplasmic reticulum (ER) membranes of hepatocytes, driving SREBF1 processing and lipogenesis. Via LPCAT3, triggers the incorporation of arachidonate into phosphatidylcholines of ER membranes, increasing membrane dynamics and enabling triacylglycerols transfer to nascent very low-density lipoprotein (VLDL) particles. Via LPCAT3 also counteracts lipid-induced ER stress response and inflammation, likely by modulating SRC kinase membrane compartmentalization and limiting the synthesis of lipid inflammatory mediators. This Homo sapiens (Human) protein is Oxysterols receptor LXR-alpha (NR1H3).